Consider the following 287-residue polypeptide: Bifunctional protein FolD (287 aa).

Residues 166–168 and Ile-232 each bind NADP(+); that span reads GAS.

This sequence belongs to the tetrahydrofolate dehydrogenase/cyclohydrolase family. Homodimer.

The enzyme catalyses (6R)-5,10-methylene-5,6,7,8-tetrahydrofolate + NADP(+) = (6R)-5,10-methenyltetrahydrofolate + NADPH. The catalysed reaction is (6R)-5,10-methenyltetrahydrofolate + H2O = (6R)-10-formyltetrahydrofolate + H(+). The protein operates within one-carbon metabolism; tetrahydrofolate interconversion. Catalyzes the oxidation of 5,10-methylenetetrahydrofolate to 5,10-methenyltetrahydrofolate and then the hydrolysis of 5,10-methenyltetrahydrofolate to 10-formyltetrahydrofolate. The protein is Bifunctional protein FolD of Chromohalobacter salexigens (strain ATCC BAA-138 / DSM 3043 / CIP 106854 / NCIMB 13768 / 1H11).